The chain runs to 1491 residues: CLIP-associating protein (1491 aa).

HEAT repeat units follow at residues 44–82 (CTDM…RLGS), 85–123 (NAYT…HRVL), 163–201 (QLSV…HVGD), and 402–440 (DAFC…YTHA). 2 disordered regions span residues 537–586 (RERE…AVDT) and 600–739 (LYSR…NNPV). The segment covering 542 to 551 (GGGGGTGTGT) has biased composition (gly residues). A compositionally biased stretch (polar residues) spans 569–580 (GTLQKPTPSMRS). A phosphoserine mark is found at Ser-582, Ser-626, and Ser-634. The span at 632 to 646 (LNSNSGGTPATTPGS) shows a compositional bias: polar residues. Thr-648 carries the phosphothreonine modification. Composition is skewed to polar residues over residues 657–671 (VSQS…SPST) and 699–712 (PRST…SPTR). Phosphoserine occurs at positions 806, 817, 820, 822, and 824. HEAT repeat units lie at residues 874–912 (QQQL…VHAN) and 955–993 (QLQL…TYCK). Disordered regions lie at residues 1065-1127 (HMRR…SVEQ) and 1167-1205 (GHLQ…ESAT). Composition is skewed to low complexity over residues 1070 to 1097 (SQSC…QSPS), 1111 to 1124 (LSIS…RQSS), and 1181 to 1200 (ASLS…QSNT). Phosphoserine occurs at positions 1120, 1123, and 1124. HEAT repeat units lie at residues 1289 to 1327 (NKHF…SNKM) and 1408 to 1446 (DAHL…VLGE).

Belongs to the CLASP family. As to quaternary structure, interacts with CLIP-190 and microtubules. As to expression, expressed in testis and ovary.

Its subcellular location is the cytoplasm. The protein localises to the cytoskeleton. The protein resides in the nucleus. It is found in the microtubule organizing center. It localises to the centrosome. Its subcellular location is the spindle. The protein localises to the cell projection. The protein resides in the growth cone. It is found in the cleavage furrow. Functionally, microtubule plus-end tracking protein that promotes the stabilization of dynamic microtubules. Required for several aspects of mitotic spindle formation including the formation of the overlapping central spindle microtubules and kinetochore attachment. Required for the incorporation of tubulin subunits at the plus ends of kinetochore microtubules during poleward microtubule flux. Acts antagonistically to Klp10A and Klp67A to maintain metaphase spindle length. Also required for guidance of CNS axons downstream of Abl. May function to identify a subset of microtubules that probe the peripheral growth cone domain, where guidance signals exert their influence on cytoskeletal organization. Also required during oogenesis for the organization of the polarized microtubule network inside the 16-cell cyst that ensures oocyte differentiation. This is CLIP-associating protein (chb) from Drosophila melanogaster (Fruit fly).